The primary structure comprises 151 residues: Large ribosomal subunit protein bL9 (151 aa).

The protein belongs to the bacterial ribosomal protein bL9 family.

Its function is as follows. Binds to the 23S rRNA. The chain is Large ribosomal subunit protein bL9 from Prochlorococcus marinus (strain MIT 9215).